A 218-amino-acid polypeptide reads, in one-letter code: UPF0319 protein swp_2242 (218 aa).

An N-terminal signal peptide occupies residues 1 to 21; it reads MRLSQSVLTALLICVNSAAFA.

This sequence belongs to the UPF0319 family.

In Shewanella piezotolerans (strain WP3 / JCM 13877), this protein is UPF0319 protein swp_2242.